We begin with the raw amino-acid sequence, 149 residues long: Chromophore lyase CpcS/CpeS homolog (149 aa).

Belongs to the CpcS/CpeS biliprotein lyase family.

The protein resides in the plastid. It localises to the chloroplast. Its function is as follows. Might function to covalently attach a chromophore to Cys residue(s) of phycobiliproteins. The sequence is that of Chromophore lyase CpcS/CpeS homolog from Pyropia yezoensis (Susabi-nori).